The primary structure comprises 454 residues: Response regulator PleD (454 aa).

Response regulatory domains lie at 4-120 and 155-269; these read RILV…RSLT and RVLI…KTQI. Residues D9, D10, D53, and M55 each coordinate Mg(2+). D53 carries the 4-aspartylphosphate modification. One can recognise a GGDEF domain in the interval 319 to 454; the sequence is DPVSALLIDI…GRNAVVGKAA (136 aa). Substrate is bound by residues N335 and D344. Catalysis depends on E370, which acts as the Proton acceptor.

As to quaternary structure, homodimer. Inactive monomer in solution. In terms of processing, phosphorylated by PleC and DivJ. Phosphorylation stimulates cyclase activity.

Its subcellular location is the cytoplasm. It catalyses the reaction 2 GTP = 3',3'-c-di-GMP + 2 diphosphate. The protein operates within purine metabolism; 3',5'-cyclic di-GMP biosynthesis. Its activity is regulated as follows. Allosterically inhibited by the product c-di-GMP. In terms of biological role, response regulator that is part of a signal transduction pathway controlling cell differentiation in the swarmer-to-stalked cell transition. Catalyzes the condensation of two GTP molecules to the cyclic dinucleotide di-GMP (c-di-GMP), which acts as a secondary messenger. The sequence is that of Response regulator PleD (pleD) from Caulobacter vibrioides (strain ATCC 19089 / CIP 103742 / CB 15) (Caulobacter crescentus).